A 119-amino-acid polypeptide reads, in one-letter code: Large ribosomal subunit protein bL20 (119 aa).

This sequence belongs to the bacterial ribosomal protein bL20 family.

Functionally, binds directly to 23S ribosomal RNA and is necessary for the in vitro assembly process of the 50S ribosomal subunit. It is not involved in the protein synthesizing functions of that subunit. The chain is Large ribosomal subunit protein bL20 from Geobacillus sp. (strain WCH70).